We begin with the raw amino-acid sequence, 113 residues long: Pro-corazonin (113 aa).

The first 19 residues, 1–19 (MATNITMFLIVITLTSVAA), serve as a signal peptide directing secretion. Gln20 carries the post-translational modification Pyrrolidone carboxylic acid. Asn30 bears the Asparagine amide mark. Residues 74–96 (LGPCDTSKTRSTTNPSDTNTSAV) form a disordered region. Residues 82 to 96 (TRSTTNPSDTNTSAV) show a composition bias toward polar residues.

This sequence belongs to the corazonin family. In terms of tissue distribution, four pairs of lateral neurosecretory cells in the brains of late instar larvae, pupae and adults.

Its subcellular location is the secreted. Its function is as follows. Cardioactive peptide. Corazonin is probably involved in the physiological regulation of the heart beat. The chain is Pro-corazonin from Galleria mellonella (Greater wax moth).